Reading from the N-terminus, the 372-residue chain is tRNA-specific 2-thiouridylase MnmA (372 aa).

Residues 16 to 23 and M42 contribute to the ATP site; that span reads GMSGGVDS. The interaction with target base in tRNA stretch occupies residues 102-104; the sequence is NPD. The active-site Nucleophile is the C107. C107 and C205 are disulfide-bonded. Residue G132 participates in ATP binding. Positions 155–157 are interaction with tRNA; it reads KDQ. C205 acts as the Cysteine persulfide intermediate in catalysis. Residues 317-318 form an interaction with tRNA region; sequence RY.

This sequence belongs to the MnmA/TRMU family.

The protein resides in the cytoplasm. It carries out the reaction S-sulfanyl-L-cysteinyl-[protein] + uridine(34) in tRNA + AH2 + ATP = 2-thiouridine(34) in tRNA + L-cysteinyl-[protein] + A + AMP + diphosphate + H(+). Catalyzes the 2-thiolation of uridine at the wobble position (U34) of tRNA, leading to the formation of s(2)U34. The protein is tRNA-specific 2-thiouridylase MnmA of Shewanella sp. (strain MR-4).